We begin with the raw amino-acid sequence, 672 residues long: Beta-galactosidase GanA (672 aa).

R105 provides a ligand contact to substrate. C109 contributes to the Zn(2+) binding site. N143 is a substrate binding site. E144 serves as the catalytic Proton donor. Zn(2+) contacts are provided by C149, C151, and C154. The active-site Nucleophile is E308. Substrate is bound by residues W316 and 356–359 (EKLH).

Belongs to the glycosyl hydrolase 42 family. Homotrimer.

It carries out the reaction Hydrolysis of terminal non-reducing beta-D-galactose residues in beta-D-galactosides.. With respect to regulation, inhibited by zinc, cobalt and copper ions. Involved in galactan degradation. Hydrolyzes galactooligosaccharides released by the endo-beta-1,4-galactanase GanB from galactan. Degrades galactotetraose, galactotriose and galactobiose, generating galactose as the end product. It is unable to use lactose. In vitro, shows maximal activity with o-nitrophenyl-beta-D-galactopyranoside (ONPG) and p-nitrophenyl-beta-D-galactopyranoside (PNPG) as substrates, trace activity with p-nitrophenyl-alpha-L-arabinopyranoside and o-nitrophenyl-beta-D-fucopyranoside as substrates, but no activity with p-nitrophenyl-alpha-D-galactopyranoside, p-nitrophenyl-beta-D-glucopyranoside, o-nitrophenyl-beta-D-xylopyranoside, p-nitrophenyl-beta-D-mannopyranoside or p-nitrophenyl-alpha-L-arabinofuranoside as substrates. The sequence is that of Beta-galactosidase GanA from Bacillus subtilis (strain 168).